The chain runs to 458 residues: Glutamate--tRNA ligase 2 (458 aa).

The short motif at 20–30 is the 'HIGH' region element; that stretch reads PSPTGLIHVGN. The 'KMSKS' region motif lies at 251–255; the sequence is GLSKR. ATP is bound at residue K254.

Belongs to the class-I aminoacyl-tRNA synthetase family. Glutamate--tRNA ligase type 1 subfamily. In terms of assembly, monomer.

Its subcellular location is the cytoplasm. The enzyme catalyses tRNA(Glu) + L-glutamate + ATP = L-glutamyl-tRNA(Glu) + AMP + diphosphate. Its function is as follows. Catalyzes the attachment of glutamate to tRNA(Glu) in a two-step reaction: glutamate is first activated by ATP to form Glu-AMP and then transferred to the acceptor end of tRNA(Glu). The polypeptide is Glutamate--tRNA ligase 2 (Xanthobacter autotrophicus (strain ATCC BAA-1158 / Py2)).